A 205-amino-acid polypeptide reads, in one-letter code: Small ribosomal subunit protein uS4 (205 aa).

A compositionally biased stretch (basic and acidic residues) spans 1 to 16 (MSKRETTKYKIDRRMG). The tract at residues 1 to 46 (MSKRETTKYKIDRRMGENIWGRPKSPVNRRDYGPGQHGQRRKGKLS) is disordered. Positions 94 to 157 (SRLDAVIYRA…KQLVLVLESV (64 aa)) constitute an S4 RNA-binding domain.

This sequence belongs to the universal ribosomal protein uS4 family. In terms of assembly, part of the 30S ribosomal subunit. Contacts protein S5. The interaction surface between S4 and S5 is involved in control of translational fidelity.

One of the primary rRNA binding proteins, it binds directly to 16S rRNA where it nucleates assembly of the body of the 30S subunit. In terms of biological role, with S5 and S12 plays an important role in translational accuracy. The protein is Small ribosomal subunit protein uS4 of Bartonella henselae (strain ATCC 49882 / DSM 28221 / CCUG 30454 / Houston 1) (Rochalimaea henselae).